The chain runs to 256 residues: Ribonuclease 3 (256 aa).

The 123-residue stretch at 3-125 folds into the RNase III domain; sequence LDALQQRLGY…IFGAVFLDGG (123 aa). E38 contributes to the Mg(2+) binding site. D42 is a catalytic residue. Residues D111 and E114 each coordinate Mg(2+). The active site involves E114. The 71-residue stretch at 152-222 folds into the DRBM domain; it reads DAKTLLQEYL…AKLALDEAHR (71 aa). Residues 226-256 form a disordered region; that stretch reads QLVKRSRAERTGKTRKQATPPDPQLSLRLKE.

Belongs to the ribonuclease III family. Homodimer. Requires Mg(2+) as cofactor.

It localises to the cytoplasm. It carries out the reaction Endonucleolytic cleavage to 5'-phosphomonoester.. Functionally, digests double-stranded RNA. Involved in the processing of primary rRNA transcript to yield the immediate precursors to the large and small rRNAs (23S and 16S). Processes some mRNAs, and tRNAs when they are encoded in the rRNA operon. Processes pre-crRNA and tracrRNA of type II CRISPR loci if present in the organism. In Ralstonia pickettii (strain 12J), this protein is Ribonuclease 3.